The following is a 222-amino-acid chain: uncharacterized protein (222 aa).

7 consecutive transmembrane segments (helical) span residues 26–46 (YGLLALTLAFSGLVAYVSQQM), 48–68 (LPYPNVFVVLIGFYGLFFLTV), 75–95 (WGLVSTFALTGFMGYTLGPIL), 107–127 (VITSAFAMTALVFFGLSAYVL), 139–159 (FITAGFFVLLGAVLVSLFFQI), 166–186 (ISAGFVLFSSAMILYQTSAII), and 198–218 (ISLYVSIYNLFISLLQIFGIA).

It belongs to the BI1 family.

The protein localises to the cell membrane. This is an uncharacterized protein from Pseudomonas aeruginosa (strain ATCC 15692 / DSM 22644 / CIP 104116 / JCM 14847 / LMG 12228 / 1C / PRS 101 / PAO1).